The following is a 158-amino-acid chain: Protein Smg homolog (158 aa).

This sequence belongs to the Smg family.

The sequence is that of Protein Smg homolog from Shewanella oneidensis (strain ATCC 700550 / JCM 31522 / CIP 106686 / LMG 19005 / NCIMB 14063 / MR-1).